The chain runs to 87 residues: Small ribosomal subunit protein uS17 (87 aa).

The protein belongs to the universal ribosomal protein uS17 family. As to quaternary structure, part of the 30S ribosomal subunit.

One of the primary rRNA binding proteins, it binds specifically to the 5'-end of 16S ribosomal RNA. This is Small ribosomal subunit protein uS17 from Onion yellows phytoplasma (strain OY-M).